A 127-amino-acid chain; its full sequence is Small ribosomal subunit protein uS12m (127 aa).

This sequence belongs to the universal ribosomal protein uS12 family.

It localises to the mitochondrion. Its function is as follows. Protein S12 is involved in the translation initiation step. The polypeptide is Small ribosomal subunit protein uS12m (RPS12) (Chondrus crispus (Carrageen Irish moss)).